The chain runs to 233 residues: 2-C-methyl-D-erythritol 4-phosphate cytidylyltransferase (233 aa).

It belongs to the IspD/TarI cytidylyltransferase family. IspD subfamily.

The enzyme catalyses 2-C-methyl-D-erythritol 4-phosphate + CTP + H(+) = 4-CDP-2-C-methyl-D-erythritol + diphosphate. The protein operates within isoprenoid biosynthesis; isopentenyl diphosphate biosynthesis via DXP pathway; isopentenyl diphosphate from 1-deoxy-D-xylulose 5-phosphate: step 2/6. Functionally, catalyzes the formation of 4-diphosphocytidyl-2-C-methyl-D-erythritol from CTP and 2-C-methyl-D-erythritol 4-phosphate (MEP). In Gloeobacter violaceus (strain ATCC 29082 / PCC 7421), this protein is 2-C-methyl-D-erythritol 4-phosphate cytidylyltransferase.